A 465-amino-acid polypeptide reads, in one-letter code: Phenylalanine--tRNA ligase alpha subunit (465 aa).

Residues Thr309, 348–350 (QLD), and Phe388 contribute to the L-phenylalanine site. Position 390 (Glu390) interacts with Mg(2+).

This sequence belongs to the class-II aminoacyl-tRNA synthetase family. Phe-tRNA synthetase alpha subunit type 2 subfamily. Tetramer of two alpha and two beta subunits. Mg(2+) is required as a cofactor.

The protein resides in the cytoplasm. The enzyme catalyses tRNA(Phe) + L-phenylalanine + ATP = L-phenylalanyl-tRNA(Phe) + AMP + diphosphate + H(+). The chain is Phenylalanine--tRNA ligase alpha subunit from Sulfolobus acidocaldarius (strain ATCC 33909 / DSM 639 / JCM 8929 / NBRC 15157 / NCIMB 11770).